The sequence spans 1227 residues: DNA-directed RNA polymerase subunit beta (1227 aa).

It belongs to the RNA polymerase beta chain family. In terms of assembly, the RNAP catalytic core consists of 2 alpha, 1 beta, 1 beta' and 1 omega subunit. When a sigma factor is associated with the core the holoenzyme is formed, which can initiate transcription.

The catalysed reaction is RNA(n) + a ribonucleoside 5'-triphosphate = RNA(n+1) + diphosphate. Functionally, DNA-dependent RNA polymerase catalyzes the transcription of DNA into RNA using the four ribonucleoside triphosphates as substrates. The sequence is that of DNA-directed RNA polymerase subunit beta from Chloroflexus aggregans (strain MD-66 / DSM 9485).